We begin with the raw amino-acid sequence, 307 residues long: GTPase Era (307 aa).

Residues 7-181 (RCGWVALLGP…VKLVKSKLPV (175 aa)) form the Era-type G domain. A G1 region spans residues 15-22 (GPPNAGKS). 15-22 (GPPNAGKS) provides a ligand contact to GTP. A G2 region spans residues 41–45 (QTTRN). The G3 stretch occupies residues 62–65 (DTPG). GTP contacts are provided by residues 62–66 (DTPGI) and 130–133 (NKVD). Residues 130–133 (NKVD) are G4. The segment at 160–162 (VSA) is G5. Positions 212 to 290 (LRQELPYSVA…HLELWVKVRE (79 aa)) constitute a KH type-2 domain.

Belongs to the TRAFAC class TrmE-Era-EngA-EngB-Septin-like GTPase superfamily. Era GTPase family. As to quaternary structure, monomer.

The protein resides in the cytoplasm. The protein localises to the cell inner membrane. In terms of biological role, an essential GTPase that binds both GDP and GTP, with rapid nucleotide exchange. Plays a role in 16S rRNA processing and 30S ribosomal subunit biogenesis and possibly also in cell cycle regulation and energy metabolism. This is GTPase Era from Nitratidesulfovibrio vulgaris (strain DSM 19637 / Miyazaki F) (Desulfovibrio vulgaris).